A 144-amino-acid polypeptide reads, in one-letter code: Flagellar assembly factor FliW (144 aa).

It belongs to the FliW family. As to quaternary structure, interacts with translational regulator CsrA and flagellin(s).

It is found in the cytoplasm. In terms of biological role, acts as an anti-CsrA protein, binds CsrA and prevents it from repressing translation of its target genes, one of which is flagellin. Binds to flagellin and participates in the assembly of the flagellum. The sequence is that of Flagellar assembly factor FliW from Bacillus pumilus (strain SAFR-032).